We begin with the raw amino-acid sequence, 509 residues long: Bifunctional pantoate ligase/cytidylate kinase (509 aa).

The tract at residues 1 to 275 is pantoate--beta-alanine ligase; it reads MKKLIIRKTE…CGETRLIDHV (275 aa). 29-36 is a binding site for ATP; it reads MGNLHDGH. The Proton donor role is filled by H36. Q61 provides a ligand contact to (R)-pantoate. Q61 serves as a coordination point for beta-alanine. 149 to 152 is an ATP binding site; it reads GEKD. Q155 lines the (R)-pantoate pocket. 186–189 provides a ligand contact to ATP; it reads LSSR. Residues 276–509 form a cytidylate kinase region; the sequence is FLMKRRPIIA…DKIPKESEIK (234 aa).

This sequence in the N-terminal section; belongs to the pantothenate synthetase family. The protein in the C-terminal section; belongs to the cytidylate kinase family. Type 1 subfamily.

The protein resides in the cytoplasm. It catalyses the reaction (R)-pantoate + beta-alanine + ATP = (R)-pantothenate + AMP + diphosphate + H(+). The enzyme catalyses CMP + ATP = CDP + ADP. It carries out the reaction dCMP + ATP = dCDP + ADP. It participates in cofactor biosynthesis; (R)-pantothenate biosynthesis; (R)-pantothenate from (R)-pantoate and beta-alanine: step 1/1. Catalyzes the condensation of pantoate with beta-alanine in an ATP-dependent reaction via a pantoyl-adenylate intermediate. Functionally, catalyzes the transfer of a phosphate group from ATP to either CMP or dCMP to form CDP or dCDP and ADP, respectively. The sequence is that of Bifunctional pantoate ligase/cytidylate kinase from Prochlorococcus marinus (strain AS9601).